Consider the following 395-residue polypeptide: S-adenosylmethionine synthase (395 aa).

Position 12 (histidine 12) interacts with ATP. Residue aspartate 14 coordinates Mg(2+). Glutamate 40 is a K(+) binding site. L-methionine contacts are provided by glutamate 53 and glutamine 96. Positions glutamine 96–phenylalanine 106 are flexible loop. Residues aspartate 174 to lysine 176, arginine 242 to phenylalanine 243, aspartate 251, arginine 257 to lysine 258, alanine 274, and lysine 278 each bind ATP. Residue aspartate 251 participates in L-methionine binding. An L-methionine-binding site is contributed by lysine 282.

It belongs to the AdoMet synthase family. As to quaternary structure, homotetramer; dimer of dimers. The cofactor is Mg(2+). K(+) serves as cofactor.

The protein resides in the cytoplasm. It catalyses the reaction L-methionine + ATP + H2O = S-adenosyl-L-methionine + phosphate + diphosphate. The protein operates within amino-acid biosynthesis; S-adenosyl-L-methionine biosynthesis; S-adenosyl-L-methionine from L-methionine: step 1/1. Functionally, catalyzes the formation of S-adenosylmethionine (AdoMet) from methionine and ATP. The overall synthetic reaction is composed of two sequential steps, AdoMet formation and the subsequent tripolyphosphate hydrolysis which occurs prior to release of AdoMet from the enzyme. In Tropheryma whipplei (strain Twist) (Whipple's bacillus), this protein is S-adenosylmethionine synthase.